A 603-amino-acid polypeptide reads, in one-letter code: Chaperone protein DnaK (603 aa).

Thr175 carries the phosphothreonine; by autocatalysis modification. Over residues 573 to 586 (AQQAQQQNPDNQNN) the composition is skewed to low complexity. Residues 573-603 (AQQAQQQNPDNQNNNKDDVTEATVTDDSTKK) form a disordered region. Residues 594–603 (ATVTDDSTKK) are compositionally biased toward polar residues.

This sequence belongs to the heat shock protein 70 family.

Functionally, acts as a chaperone. This Ureaplasma parvum serovar 3 (strain ATCC 27815 / 27 / NCTC 11736) protein is Chaperone protein DnaK.